The primary structure comprises 453 residues: UDP-N-acetylmuramoylalanine--D-glutamate ligase (453 aa).

115 to 121 (GSNGKTT) is a binding site for ATP.

The protein belongs to the MurCDEF family.

It localises to the cytoplasm. The catalysed reaction is UDP-N-acetyl-alpha-D-muramoyl-L-alanine + D-glutamate + ATP = UDP-N-acetyl-alpha-D-muramoyl-L-alanyl-D-glutamate + ADP + phosphate + H(+). Its pathway is cell wall biogenesis; peptidoglycan biosynthesis. Cell wall formation. Catalyzes the addition of glutamate to the nucleotide precursor UDP-N-acetylmuramoyl-L-alanine (UMA). The protein is UDP-N-acetylmuramoylalanine--D-glutamate ligase of Koribacter versatilis (strain Ellin345).